The primary structure comprises 72 residues: UPF0270 protein YheU (72 aa).

It belongs to the UPF0270 family.

In Salmonella arizonae (strain ATCC BAA-731 / CDC346-86 / RSK2980), this protein is UPF0270 protein YheU.